A 64-amino-acid chain; its full sequence is Makatoxin-1 (64 aa).

The LCN-type CS-alpha/beta domain maps to 2 to 64 (RDAYIADSEN…VPIRISGSCR (63 aa)). Disulfide bonds link Cys12/Cys63, Cys16/Cys36, Cys22/Cys46, and Cys26/Cys48.

In terms of tissue distribution, expressed by the venom gland.

The protein localises to the secreted. In terms of biological role, this protein markedly relaxes the rat carbachol-precontracted anococcygeus muscle. This relaxation is inhibited by the inhibitor of nitric oxide (NO) synthase, N-nitro-L-arginine methyl ester (L-NAME), suggesting that the response induced by this protein is NO-mediated. The polypeptide is Makatoxin-1 (Olivierus martensii (Manchurian scorpion)).